The following is a 318-amino-acid chain: Aspartate carbamoyltransferase catalytic subunit (318 aa).

Arg54 and Thr55 together coordinate carbamoyl phosphate. Position 82 (Lys82) interacts with L-aspartate. The carbamoyl phosphate site is built by Arg104, His134, and Gln137. Residues Arg174 and Arg230 each coordinate L-aspartate. Carbamoyl phosphate contacts are provided by Gly271 and Pro272.

Belongs to the aspartate/ornithine carbamoyltransferase superfamily. ATCase family. Heterododecamer (2C3:3R2) of six catalytic PyrB chains organized as two trimers (C3), and six regulatory PyrI chains organized as three dimers (R2).

It catalyses the reaction carbamoyl phosphate + L-aspartate = N-carbamoyl-L-aspartate + phosphate + H(+). It participates in pyrimidine metabolism; UMP biosynthesis via de novo pathway; (S)-dihydroorotate from bicarbonate: step 2/3. Its function is as follows. Catalyzes the condensation of carbamoyl phosphate and aspartate to form carbamoyl aspartate and inorganic phosphate, the committed step in the de novo pyrimidine nucleotide biosynthesis pathway. In Clavibacter sepedonicus (Clavibacter michiganensis subsp. sepedonicus), this protein is Aspartate carbamoyltransferase catalytic subunit.